The sequence spans 473 residues: MSDGNPELLSTSQTYNSQGESNEDYEIPPITPPNLPEPSLLHLGDHEAGYHSLCHGLAPNGLLPAYSYQAMDLPAIMVSNMLAQDGHLLSGQLPTIQEMVHSEVAAYDSGRPGPLLGRPAMLASHMSALSQSQLISQMGLRSGIAHSSPSPPGSKSATPSPSSSTQEEESDAHFKISGEKRPSTDPGKKAKNPKKKKKKDPNEPQKPVSAYALFFRDTQAAIKGQNPSATFGDVSKIVASMWDSLGEEQKQAYKRKTEAAKKEYLKALAAYRASLVSKSPPDQGEAKNAQANPPAKMLPPKQPMYAMPGLASFLTPSDLQAFRSAASPASLARTLGSKALLPGLSTSPPPPSFPLSPSLHQQLPLPPHAQGTLLSPPLSMSPAPQPPVLPAPMALQVQLAMSPSPPGPQDFPHISDFPSGSGSRSPGPSNPSSSGDWDGSYPSGERGLGTCRLCRSSPPPTTSPKNLQEPSAR.

Disordered stretches follow at residues 1 to 42 (MSDG…SLLH), 139 to 211 (GLRS…VSAY), 277 to 302 (SKSP…PPKQ), and 340 to 473 (LLPG…PSAR). Residues 8 to 20 (LLSTSQTYNSQGE) show a composition bias toward polar residues. Residues 25-63 (YEIPPITPPNLPEPSLLHLGDHEAGYHSLCHGLAPNGLL) are required for transcriptional activation. A compositionally biased stretch (low complexity) spans 153 to 164 (GSKSATPSPSSS). The span at 171-188 (DAHFKISGEKRPSTDPGK) shows a compositional bias: basic and acidic residues. The Nuclear localization signal signature appears at 172–201 (AHFKISGEKRPSTDPGKKAKNPKKKKKKDP). The segment covering 189–199 (KAKNPKKKKKK) has biased composition (basic residues). The segment at residues 204-272 (PQKPVSAYAL…EYLKALAAYR (69 aa)) is a DNA-binding region (HMG box). Low complexity-rich tracts occupy residues 373–382 (LLSPPLSMSP) and 415–440 (SDFP…WDGS). The segment covering 463 to 473 (SPKNLQEPSAR) has biased composition (polar residues).

Highly expressed in ovary, where it is restricted to undifferentiated granulosa cells. Expressed in hypothalamus, pituitary gland, testis and uterus.

It localises to the nucleus. Its function is as follows. Putative transcriptional activator involved in the hypothalamo-pituitary-gonadal system. The polypeptide is TOX high mobility group box family member 2 (Tox2) (Rattus norvegicus (Rat)).